A 601-amino-acid chain; its full sequence is Glutathione-regulated potassium-efflux system protein KefB (601 aa).

13 helical membrane passes run 4–24 (SDLL…VPLA), 29–49 (IGAV…GLGF), 55–75 (EILH…GLEL), 87–107 (IFGV…GLLM), 115–135 (AAVV…LQLM), 152–172 (VLLF…LLAG), 177–197 (HVNW…LIGG), 207–227 (FIAS…LVLG), 230–250 (LFME…GVLL), 268–288 (GLLL…GVLY), 291–311 (LLWV…VLYL), 326–346 (FAGV…LPAS), and 356–376 (ALLL…MKGI). One can recognise an RCK N-terminal domain in the interval 400-519 (KPQVIIVGFG…AGVTQFSRET (120 aa)).

The protein belongs to the monovalent cation:proton antiporter 2 (CPA2) transporter (TC 2.A.37) family. KefB subfamily. Interacts with the regulatory subunit KefG.

It is found in the cell inner membrane. Functionally, pore-forming subunit of a potassium efflux system that confers protection against electrophiles. Catalyzes K(+)/H(+) antiport. This chain is Glutathione-regulated potassium-efflux system protein KefB, found in Klebsiella pneumoniae (strain 342).